A 283-amino-acid chain; its full sequence is Phosphate import ATP-binding protein PstB 2 (283 aa).

The ABC transporter domain occupies 36–278 (LQVKQFNFYY…PKKKQTEDYI (243 aa)). 69–76 (GPSGCGKS) contacts ATP.

Belongs to the ABC transporter superfamily. Phosphate importer (TC 3.A.1.7) family. In terms of assembly, the complex is composed of two ATP-binding proteins (PstB), two transmembrane proteins (PstC and PstA) and a solute-binding protein (PstS).

The protein resides in the cell inner membrane. The enzyme catalyses phosphate(out) + ATP + H2O = ADP + 2 phosphate(in) + H(+). Functionally, part of the ABC transporter complex PstSACB involved in phosphate import. Responsible for energy coupling to the transport system. The sequence is that of Phosphate import ATP-binding protein PstB 2 from Nitrosococcus oceani (strain ATCC 19707 / BCRC 17464 / JCM 30415 / NCIMB 11848 / C-107).